Reading from the N-terminus, the 696-residue chain is Elongation factor G (696 aa).

Residues 8 to 290 (ERYRNIGISA…KVIELMPAPT (283 aa)) enclose the tr-type G domain. Residues 17 to 24 (AHIDAGKT), 88 to 92 (DTPGH), and 142 to 145 (NKMD) contribute to the GTP site.

It belongs to the TRAFAC class translation factor GTPase superfamily. Classic translation factor GTPase family. EF-G/EF-2 subfamily.

Its subcellular location is the cytoplasm. In terms of biological role, catalyzes the GTP-dependent ribosomal translocation step during translation elongation. During this step, the ribosome changes from the pre-translocational (PRE) to the post-translocational (POST) state as the newly formed A-site-bound peptidyl-tRNA and P-site-bound deacylated tRNA move to the P and E sites, respectively. Catalyzes the coordinated movement of the two tRNA molecules, the mRNA and conformational changes in the ribosome. This Thiobacillus denitrificans (strain ATCC 25259 / T1) protein is Elongation factor G.